Reading from the N-terminus, the 256-residue chain is Pimeloyl-[acyl-carrier protein] methyl ester esterase (256 aa).

Residues 15–242 (HLVLLHGWGL…AAHAPFISHP (228 aa)) form the AB hydrolase-1 domain. Substrate is bound by residues Trp22, 82–83 (SL), and 143–147 (FLALQ). The active-site Nucleophile is the Ser82. Residues Asp207 and His235 contribute to the active site. His235 is a binding site for substrate.

The protein belongs to the AB hydrolase superfamily. Carboxylesterase BioH family. Monomer.

Its subcellular location is the cytoplasm. The catalysed reaction is 6-carboxyhexanoyl-[ACP] methyl ester + H2O = 6-carboxyhexanoyl-[ACP] + methanol + H(+). Its pathway is cofactor biosynthesis; biotin biosynthesis. Functionally, the physiological role of BioH is to remove the methyl group introduced by BioC when the pimeloyl moiety is complete. It allows to synthesize pimeloyl-ACP via the fatty acid synthetic pathway through the hydrolysis of the ester bonds of pimeloyl-ACP esters. This chain is Pimeloyl-[acyl-carrier protein] methyl ester esterase, found in Escherichia coli O127:H6 (strain E2348/69 / EPEC).